The primary structure comprises 147 residues: Phosphoribosyl-AMP cyclohydrolase 2 (147 aa).

Residue D99 coordinates Mg(2+). Residue C100 participates in Zn(2+) binding. The Mg(2+) site is built by D101 and D103. Zn(2+) is bound by residues C116 and C123.

It belongs to the PRA-CH family. In terms of assembly, homodimer. Requires Mg(2+) as cofactor. Zn(2+) is required as a cofactor.

It is found in the cytoplasm. The enzyme catalyses 1-(5-phospho-beta-D-ribosyl)-5'-AMP + H2O = 1-(5-phospho-beta-D-ribosyl)-5-[(5-phospho-beta-D-ribosylamino)methylideneamino]imidazole-4-carboxamide. It functions in the pathway amino-acid biosynthesis; L-histidine biosynthesis; L-histidine from 5-phospho-alpha-D-ribose 1-diphosphate: step 3/9. Functionally, catalyzes the hydrolysis of the adenine ring of phosphoribosyl-AMP. This Pseudomonas fluorescens (strain ATCC BAA-477 / NRRL B-23932 / Pf-5) protein is Phosphoribosyl-AMP cyclohydrolase 2.